Consider the following 517-residue polypeptide: MRFPNRKLHTAVNGGDSGVSTHFRNPFVHELRFTTLQKLKIAVMTVTLFPVRLLFAAFMMLLAWPFAFVATVGRSENAVEPLSWWRWLVDLALKAIMRAMWFSGGFHWVRVKGRPALPSEAPILTMAPHSSYFDAIPVTMTMASIVMKAESKDIPVWGTLIKFIRPVFVSRSDQDSRRKTVEEIKRRASSNGEWPQIMIFPEGTCTNRSCLIAFKPGAFIPGVPVQPVVLRYPNELDTISWTWQGPGAFKILWLTLCQLHNFVEIEYLPTYTPSEEEKKDPALFASNVRRIMAKALGLPIIDYSFEDCQLAMAKGPLRLPKHTCLLEFARLVRLLGLKTKVTDEVLQEEACSARQLCGRRLDMEGFAQYLHQPMTEAVQDIFSLFEEHGMMDVREYVIALSVVCRPFRYLDTVKLAFRMFEAQEDGAIVEDELTVILKTALGVGDLAVSELFRAIDSQDKGKITFDELCSFMEKCPDLVEQYHCLCESISQHSRESTSSSNGFCADFSPRNHSKKQD.

The Cytoplasmic segment spans residues 1-52 (MRFPNRKLHTAVNGGDSGVSTHFRNPFVHELRFTTLQKLKIAVMTVTLFPVR). Residues 53 to 73 (LLFAAFMMLLAWPFAFVATVG) form a helical; Signal-anchor for type II membrane protein membrane-spanning segment. The Lumenal portion of the chain corresponds to 74-517 (RSENAVEPLS…SPRNHSKKQD (444 aa)). The short motif at 129 to 134 (HSSYFD) is the HXXXXD motif element. N-linked (GlcNAc...) asparagine glycosylation occurs at Asn-207. In terms of domain architecture, EF-hand spans 443–478 (VGDLAVSELFRAIDSQDKGKITFDELCSFMEKCPDL). An N-linked (GlcNAc...) asparagine glycan is attached at Asn-511. The Di-lysine motif motif lies at 514 to 517 (KKQD).

It belongs to the 1-acyl-sn-glycerol-3-phosphate acyltransferase family.

It localises to the endoplasmic reticulum membrane. It is found in the golgi apparatus membrane. Its subcellular location is the cell membrane. The protein resides in the lipid droplet. It carries out the reaction a 1-acyl-sn-glycero-3-phosphocholine + an acyl-CoA = a 1,2-diacyl-sn-glycero-3-phosphocholine + CoA. It catalyses the reaction a 1-O-alkyl-sn-glycero-3-phosphocholine + acetyl-CoA = a 1-O-alkyl-2-acetyl-sn-glycero-3-phosphocholine + CoA. The catalysed reaction is a 1-acyl-sn-glycero-3-phosphate + an acyl-CoA = a 1,2-diacyl-sn-glycero-3-phosphate + CoA. The enzyme catalyses a 1-O-(1Z-alkenyl)-sn-glycero-3-phosphocholine + an acyl-CoA = a 1-O-(1Z-alkenyl)-2-acyl-sn-glycero-3-phosphocholine + CoA. It carries out the reaction 1-acyl-sn-glycero-3-phospho-(1'-sn-glycerol) + an acyl-CoA = a 1,2-diacyl-sn-glycero-3-phospho-(1'-sn-glycerol) + CoA. It catalyses the reaction 1-hexadecanoyl-sn-glycero-3-phosphocholine + hexadecanoyl-CoA = 1,2-dihexadecanoyl-sn-glycero-3-phosphocholine + CoA. The catalysed reaction is 1-O-hexadecyl-sn-glycero-3-phosphocholine + hexadecanoyl-CoA = 1-O-hexadecyl-2-hexadecanoyl-sn-glycero-3-phosphocholine + CoA. The enzyme catalyses a 1-O-(1Z-alkenyl)-sn-glycero-3-phosphocholine + hexadecanoyl-CoA = 1-O-(1Z)-alkenyl-2-hexadecanoyl-sn-glycero-3-phosphocholine + CoA. It carries out the reaction 1-hexadecanoyl-sn-glycero-3-phospho-(1'-sn-glycerol) + hexadecanoyl-CoA = 1,2-dihexadecanoyl-sn-glycero-3-phospho-(1'-sn-glycerol) + CoA. It catalyses the reaction 1-dodecanoyl-sn-glycero-3-phosphocholine + hexadecanoyl-CoA = 1-dodecanoyl-2-hexadecanoyl-sn-glycero-3-phosphocholine + CoA. The catalysed reaction is 1-tetradecanoyl-sn-glycero-3-phosphocholine + hexadecanoyl-CoA = 1-tetradecanoyl-2-hexadecanoyl-sn-glycero-3-phosphocholine + CoA. The enzyme catalyses 1-O-octadecyl-sn-glycero-3-phosphocholine + hexadecanoyl-CoA = 1-O-octadecyl-2-hexadecanoyl-sn-glycero-3-phosphocholine + CoA. It carries out the reaction 1-octadecanoyl-sn-glycero-3-phosphocholine + hexadecanoyl-CoA = 1-octadecanoyl-2-hexadecanoyl-sn-glycero-3-phosphocholine + CoA. It catalyses the reaction 1-(9Z-octadecenoyl)-sn-glycero-3-phosphocholine + hexadecanoyl-CoA = 1-(9Z-octadecenoyl)-2-hexadecanoyl-sn-glycero-3-phosphocholine + CoA. The catalysed reaction is 1-eicosanoyl-sn-glycero-3-phosphocholine + hexadecanoyl-CoA = 1-eicosanoyl-2-hexadecanoyl-sn-glycero-3-phosphocholine + CoA. The enzyme catalyses hexanoyl-CoA + 1-hexadecanoyl-sn-glycero-3-phosphocholine = 1-hexadecanoyl-2-hexanoyl-sn-glycero-3-phosphocholine + CoA. It carries out the reaction octanoyl-CoA + 1-hexadecanoyl-sn-glycero-3-phosphocholine = 1-hexadecanoyl-2-octanoyl-sn-glycero-3-phosphocholine + CoA. It catalyses the reaction decanoyl-CoA + 1-hexadecanoyl-sn-glycero-3-phosphocholine = 1-hexadecanoyl-2-decanoyl-sn-glycero-3-phosphocholine + CoA. The catalysed reaction is dodecanoyl-CoA + 1-hexadecanoyl-sn-glycero-3-phosphocholine = 1-hexadecanoyl-2-dodecanoyl-sn-glycero-3-phosphocholine + CoA. The enzyme catalyses tetradecanoyl-CoA + 1-hexadecanoyl-sn-glycero-3-phosphocholine = 1-hexadecanoyl-2-tetradecanoyl-sn-glycero-3-phosphocholine + CoA. It carries out the reaction 1-hexadecanoyl-sn-glycero-3-phosphocholine + (9Z)-octadecenoyl-CoA = 1-hexadecanoyl-2-(9Z-octadecenoyl)-sn-glycero-3-phosphocholine + CoA. It catalyses the reaction (9Z,12Z)-octadecadienoyl-CoA + 1-hexadecanoyl-sn-glycero-3-phosphocholine = 1-hexadecanoyl-2-(9Z,12Z-octadecadienoyl)-sn-glycero-3-phosphocholine + CoA. The catalysed reaction is (4Z,7Z,10Z,13Z,16Z,19Z)-docosahexaenoyl-CoA + 1-hexadecanoyl-sn-glycero-3-phosphocholine = 1-hexadecanoyl-2-(4Z,7Z,10Z,13Z,16Z,19Z-docosahexaenoyl)-sn-glycero-3-phosphocholine + CoA. The enzyme catalyses 1-hexadecanoyl-sn-glycero-3-phosphocholine + acetyl-CoA = 1-hexadecanoyl-2-acetyl-sn-glycero-3-phosphocholine + CoA. It carries out the reaction eicosanoyl-CoA + 1-hexadecanoyl-sn-glycero-3-phosphocholine = 1-hexadecanoyl-2-eicosanoyl-sn-glycero-3-phosphocholine + CoA. It catalyses the reaction 1-O-hexadecyl-sn-glycero-3-phosphocholine + acetyl-CoA = 1-O-hexadecyl-2-acetyl-sn-glycero-3-phosphocholine + CoA. The catalysed reaction is a 1-acyl-sn-glycero-3-phosphocholine + hexadecanoyl-CoA = 1-acyl-2-hexadecanoyl-sn-glycero-3-phosphocholine + CoA. The enzyme catalyses a 1-acyl-sn-glycero-3-phosphate + hexadecanoyl-CoA = 1-acyl-2-hexadecanoyl-sn-glycero-3-phosphate + CoA. It carries out the reaction 1-acyl-sn-glycero-3-phospho-(1'-sn-glycerol) + hexadecanoyl-CoA = 1-acyl-2-hexadecanoyl-sn-glycero-3-phospho-(1'-sn-glycerol) + CoA. Its pathway is lipid metabolism; phospholipid metabolism. Exhibits both acyltransferase and acetyltransferase activities. Activity is calcium-independent. Catalyzes the conversion of lysophosphatidylcholine (1-acyl-sn-glycero-3-phosphocholine or LPC) into phosphatidylcholine (1,2-diacyl-sn-glycero-3-phosphocholine or PC). Catalyzes the conversion 1-acyl-sn-glycerol-3-phosphate (lysophosphatidic acid or LPA) into 1,2-diacyl-sn-glycerol-3-phosphate (phosphatidic acid or PA) by incorporating an acyl moiety at the sn-2 position of the glycerol backbone. The sequence is that of Lysophosphatidylcholine acyltransferase 1 (lpcat1) from Danio rerio (Zebrafish).